Reading from the N-terminus, the 513-residue chain is Probable cytosol aminopeptidase (513 aa).

2 residues coordinate Mn(2+): K277 and D282. The active site involves K289. Residues D300, D359, and E361 each contribute to the Mn(2+) site. Residue R363 is part of the active site.

This sequence belongs to the peptidase M17 family. Mn(2+) is required as a cofactor.

Its subcellular location is the cytoplasm. The catalysed reaction is Release of an N-terminal amino acid, Xaa-|-Yaa-, in which Xaa is preferably Leu, but may be other amino acids including Pro although not Arg or Lys, and Yaa may be Pro. Amino acid amides and methyl esters are also readily hydrolyzed, but rates on arylamides are exceedingly low.. It carries out the reaction Release of an N-terminal amino acid, preferentially leucine, but not glutamic or aspartic acids.. Its function is as follows. Presumably involved in the processing and regular turnover of intracellular proteins. Catalyzes the removal of unsubstituted N-terminal amino acids from various peptides. In Mycobacterium sp. (strain KMS), this protein is Probable cytosol aminopeptidase.